Consider the following 532-residue polypeptide: Maternal protein exuperantia (532 aa).

2 disordered regions span residues 206-251 (CSAS…NAVQ) and 403-491 (TVKP…NGLK). Composition is skewed to low complexity over residues 220 to 231 (GSSMVSDSVSIS) and 404 to 417 (VKPV…NNNN). Polar residues predominate over residues 454–467 (SVSSLPDSTTKTPS). A Phosphoserine modification is found at serine 467.

In terms of assembly, component of the osk RNP complex, which is composed of at least exuperantia (exu), ypsilon schachtel (yps), aret (bruno), cup, and the mRNA of osk. In the sponge body, forms a ribonucleoprotein complex (RNP) containing at least me31B, exu, yps and the mRNA of osk; interactions with exu and yps are RNA dependent.

The protein resides in the cytoplasm. Its subcellular location is the cytoplasmic ribonucleoprotein granule. Ensures the proper localization of the mRNA of the bicoid gene to the anterior regions of the oocyte thus playing a fundamental role in the establishment of the polarity of the oocyte. May bind the bcd mRNA. The sequence is that of Maternal protein exuperantia (exu) from Drosophila melanogaster (Fruit fly).